The primary structure comprises 453 residues: Putative ABC transporter ATP-binding protein MM_0462 (453 aa).

An ABC transporter domain is found at 4–239 (LETRSLKYSY…QELLKKVGLR (236 aa)). 37–44 (GQNGSGKS) contacts ATP.

It belongs to the ABC transporter superfamily.

The protein localises to the cell membrane. Its function is as follows. Probably part of an ABC transporter complex. Responsible for energy coupling to the transport system. This is Putative ABC transporter ATP-binding protein MM_0462 from Methanosarcina mazei (strain ATCC BAA-159 / DSM 3647 / Goe1 / Go1 / JCM 11833 / OCM 88) (Methanosarcina frisia).